Here is a 201-residue protein sequence, read N- to C-terminus: uncharacterized protein (201 aa).

This sequence belongs to the methyltransferase superfamily.

This is an uncharacterized protein from Bacillus subtilis (strain 168).